The primary structure comprises 93 residues: MKLVTIFLLVTISLCSYSATAFLINKVPLPVDKLAPLPLDNILPFMDPLKLLLKTLGISVEHLVEGLRKCVNELGPEASEAVKKLLEALSHLV.

A signal peptide spans 1–21 (MKLVTIFLLVTISLCSYSATA).

Belongs to the secretoglobin family. UGRP subfamily. As to quaternary structure, homodimer; disulfide-linked. Monomer. Interacts with APOA1. As to expression, highly expressed in lung and trachea. Detected throughout the airway epithelium in lung, with slightly higher expression in large airways. Found in lung submucosal gland acinus where it localizes to serous-like cells. Probably expressed in club cells of the bronchioles. Not detected in other tissues tested.

It is found in the secreted. In terms of biological role, secreted cytokine-like protein. Binds to the scavenger receptor MARCO. Can also bind to pathogens including the Gram-positive bacterium L.monocytogenes, the Gram-negative bacterium P.aeruginosa, and yeast. Strongly inhibits phospholipase A2 (PLA2G1B) activity. Seems to have anti-inflammatory effects in respiratory epithelium. Also has anti-fibrotic activity in lung. May play a role in fetal lung development and maturation. Promotes branching morphogenesis during early stages of lung development. In the pituitary, may inhibit production of follicle-stimulating hormone (FSH) and luteinizing hormone (LH). This Homo sapiens (Human) protein is Secretoglobin family 3A member 2 (SCGB3A2).